A 299-amino-acid polypeptide reads, in one-letter code: GTPase Era (299 aa).

One can recognise an Era-type G domain in the interval 4–171 (KSGFVAILGR…VDILSENLDE (168 aa)). The G1 stretch occupies residues 12 to 19 (GRPNVGKS). 12 to 19 (GRPNVGKS) contacts GTP. The segment at 38 to 42 (QTTRN) is G2. Residues 59–62 (DTPG) form a G3 region. Residues 59–63 (DTPGI) and 121–124 (NKID) contribute to the GTP site. The interval 121 to 124 (NKID) is G4. The tract at residues 150–152 (ISA) is G5. Residues 202-280 (TREEIPHSVA…FLETWVKVKK (79 aa)) form the KH type-2 domain.

The protein belongs to the TRAFAC class TrmE-Era-EngA-EngB-Septin-like GTPase superfamily. Era GTPase family. As to quaternary structure, monomer.

Its subcellular location is the cytoplasm. It localises to the cell membrane. Its function is as follows. An essential GTPase that binds both GDP and GTP, with rapid nucleotide exchange. Plays a role in 16S rRNA processing and 30S ribosomal subunit biogenesis and possibly also in cell cycle regulation and energy metabolism. This Streptococcus pneumoniae (strain P1031) protein is GTPase Era.